Here is a 141-residue protein sequence, read N- to C-terminus: MPNQNLIALGFDFGMKRIGVAVGQTVTHSANAIAILKAQDGVLDWEKIKMLIETWHANVLVVGIPYNMDGSEQTLTFAARKFARKLQTRFGLPLSMVDERLTTIEAKRQWYEQGLTKRPQHLDNYAAKLILEQWLQEQKNE.

It belongs to the YqgF nuclease family.

Its subcellular location is the cytoplasm. In terms of biological role, could be a nuclease involved in processing of the 5'-end of pre-16S rRNA. The sequence is that of Putative pre-16S rRNA nuclease from Coxiella burnetii (strain CbuK_Q154) (Coxiella burnetii (strain Q154)).